We begin with the raw amino-acid sequence, 531 residues long: Peroxinectin A (531 aa).

An N-terminal signal peptide occupies residues 1–21; it reads MRLNLISFFIIFTILVSISNS. A glycan (N-linked (GlcNAc...) asparagine) is linked at Asn-62. The active-site Proton acceptor is His-101. N-linked (GlcNAc...) asparagine glycosylation is found at Asn-131 and Asn-338.

It belongs to the peroxidase family.

It is found in the secreted. It carries out the reaction 2 a phenolic donor + H2O2 = 2 a phenolic radical donor + 2 H2O. The chain is Peroxinectin A (poxA) from Dictyostelium discoideum (Social amoeba).